The sequence spans 493 residues: Zinc finger CCCH domain-containing protein 34 (493 aa).

C3H1-type zinc fingers lie at residues 14 to 43 (RRCNTDCVYFLASPFTCTKGSKCEYRHADG), 45 to 71 (RFNRRNCWYWFKGNCVNPSCTFRHPPL), and 91 to 118 (VKAANPCYFYYNSHCSKGDNCPYLHEPL). Residues 397–477 (MGECPQPANH…SFSDDFEGPK (81 aa)) are disordered. Basic residues predominate over residues 409 to 420 (FRGRRKKNRGKQ). Polar residues predominate over residues 452 to 468 (SNSSFSHSTACTPNVRS).

This chain is Zinc finger CCCH domain-containing protein 34, found in Oryza sativa subsp. japonica (Rice).